A 469-amino-acid polypeptide reads, in one-letter code: Ribulose bisphosphate carboxylase large chain (469 aa).

A propeptide spanning residues 1-2 is cleaved from the precursor; sequence MS. P3 bears the N-acetylproline mark. Residue K14 is modified to N6,N6,N6-trimethyllysine. Residues N123 and T173 each coordinate substrate. Catalysis depends on K175, which acts as the Proton acceptor. K177 lines the substrate pocket. Residues K201, D203, and E204 each contribute to the Mg(2+) site. K201 bears the N6-carboxylysine mark. H294 (proton acceptor) is an active-site residue. Residues R295, H327, and S379 each coordinate substrate.

Belongs to the RuBisCO large chain family. Type I subfamily. As to quaternary structure, heterohexadecamer of 8 large chains and 8 small chains; disulfide-linked. The disulfide link is formed within the large subunit homodimers. It depends on Mg(2+) as a cofactor. Post-translationally, the disulfide bond which can form in the large chain dimeric partners within the hexadecamer appears to be associated with oxidative stress and protein turnover.

The protein resides in the plastid. Its subcellular location is the chloroplast. It catalyses the reaction 2 (2R)-3-phosphoglycerate + 2 H(+) = D-ribulose 1,5-bisphosphate + CO2 + H2O. The catalysed reaction is D-ribulose 1,5-bisphosphate + O2 = 2-phosphoglycolate + (2R)-3-phosphoglycerate + 2 H(+). Its function is as follows. RuBisCO catalyzes two reactions: the carboxylation of D-ribulose 1,5-bisphosphate, the primary event in carbon dioxide fixation, as well as the oxidative fragmentation of the pentose substrate in the photorespiration process. Both reactions occur simultaneously and in competition at the same active site. This chain is Ribulose bisphosphate carboxylase large chain, found in Brexia madagascariensis.